The following is a 209-amino-acid chain: Putative NAD(P)H nitroreductase YdgI (209 aa).

Residues 14–16, 72–74, 161–162, and arginine 199 contribute to the FMN site; these read RRS, QTQ, and GG.

This sequence belongs to the nitroreductase family. It depends on FMN as a cofactor.

The polypeptide is Putative NAD(P)H nitroreductase YdgI (ydgI) (Bacillus subtilis (strain 168)).